The following is a 174-amino-acid chain: Co-chaperone protein HscB homolog (174 aa).

The region spanning 2–74 (NYFELFKFSP…IRRAEHMLSL (73 aa)) is the J domain.

The protein belongs to the HscB family. As to quaternary structure, interacts with HscA and stimulates its ATPase activity.

Functionally, co-chaperone involved in the maturation of iron-sulfur cluster-containing proteins. Seems to help targeting proteins to be folded toward HscA. The chain is Co-chaperone protein HscB homolog from Shewanella baltica (strain OS223).